Consider the following 570-residue polypeptide: MRASELFSPTLREVPAEAEVVSHQLLLRAGFIRRAAAGVYTYLPLAMRVIKKIEQIVREEMDRQGGQELLMPIIQPAEIWQESGRWDVYGPELFRLKDRHDRDFALGPTHEEIITVLVRGEVSSYKQLPLLLYQIQNKYRDERRPRFGLMRGREFIMKDLYSFDRDEEGLNVSYMKMYEAYTRVFQRCGLHFRPVEADSGAIGGSDTHEFMVLAESGEATVLYCDGNGCDYAANVEKAALPFKERRTEEEMRPVAARETPGCRSVEEVCGFLGVPARKIIKTLIYRTEKEVLAALVRGDRDVNEVKLLNASGALRLELAGADTVKSITGASVGYAGPVGLKGVRIIADPEAAAAVNAVTGANRDDTHLINVNPGRDFKIDLVADIRMVQAGEPCPRCGAGLKEAKGIEVGQIFKLGDKYSRALGASYLDEKGQSRPVIMGCYGIGITRTMAAAIEQNHDRDGIIWPASIAPFHVVVIPVNVKDGGQYAMAEEVYSRLWAAGIEAVLDDRTERAGVKFKDADLIGYPLRITIGAKAVEEKLVEIRIRKNGETVFVPMNELEEKVEDMLKEL.

The protein belongs to the class-II aminoacyl-tRNA synthetase family. ProS type 1 subfamily. Homodimer.

It localises to the cytoplasm. The catalysed reaction is tRNA(Pro) + L-proline + ATP = L-prolyl-tRNA(Pro) + AMP + diphosphate. In terms of biological role, catalyzes the attachment of proline to tRNA(Pro) in a two-step reaction: proline is first activated by ATP to form Pro-AMP and then transferred to the acceptor end of tRNA(Pro). As ProRS can inadvertently accommodate and process non-cognate amino acids such as alanine and cysteine, to avoid such errors it has two additional distinct editing activities against alanine. One activity is designated as 'pretransfer' editing and involves the tRNA(Pro)-independent hydrolysis of activated Ala-AMP. The other activity is designated 'posttransfer' editing and involves deacylation of mischarged Ala-tRNA(Pro). The misacylated Cys-tRNA(Pro) is not edited by ProRS. This Pelotomaculum thermopropionicum (strain DSM 13744 / JCM 10971 / SI) protein is Proline--tRNA ligase.